A 479-amino-acid chain; its full sequence is Bifunctional aspartate aminotransferase and glutamate/aspartate-prephenate aminotransferase (479 aa).

Residues Met1–Arg79 constitute a chloroplast transit peptide. L-aspartate is bound at residue Gly111. Position 172-173 (Ala172–Lys173) interacts with pyridoxal 5'-phosphate. Residues Trp197 and Asn247 each coordinate L-aspartate. Pyridoxal 5'-phosphate contacts are provided by residues Asn247, Tyr279, and Gly307–Ser309. The residue at position 310 (Lys310) is an N6-(pyridoxal phosphate)lysine. Arg318 lines the pyridoxal 5'-phosphate pocket. L-aspartate is bound at residue Arg449.

The protein belongs to the class-I pyridoxal-phosphate-dependent aminotransferase family. Homodimer. The cofactor is pyridoxal 5'-phosphate. As to expression, expressed in flowers, pistils, stamens, ovaries and at lower levels in leaves and sepals.

The protein resides in the plastid. Its subcellular location is the chloroplast. The catalysed reaction is L-aspartate + 2-oxoglutarate = oxaloacetate + L-glutamate. The enzyme catalyses L-arogenate + oxaloacetate = prephenate + L-aspartate. It catalyses the reaction L-arogenate + 2-oxoglutarate = prephenate + L-glutamate. It participates in amino-acid biosynthesis; L-phenylalanine biosynthesis; L-arogenate from prephenate (L-Asp route): step 1/1. Its pathway is amino-acid biosynthesis; L-phenylalanine biosynthesis; L-arogenate from prephenate (L-Glu route): step 1/1. Prokaryotic-type aspartate aminotransferase. Also has a prenate transaminase activity. Involved in the aromatic amino acids biosynthesis pathway via the arogenate route. Required for the transamination of prephenate into arogenate. Can use 2-oxoglutarate, oxaloacetate and prephenate as substrates, but not phenylpyruvate or 4-hydroxyphenylpyruvate. In Petunia hybrida (Petunia), this protein is Bifunctional aspartate aminotransferase and glutamate/aspartate-prephenate aminotransferase.